The chain runs to 579 residues: Vacuolar protein 8 (579 aa).

Gly2 is lipidated: N-myristoyl glycine. S-palmitoyl cysteine attachment occurs at residues Cys4, Cys5, and Cys7. ARM repeat units lie at residues 39 to 76 (NKDQYDFYSGKPLRALTTLVYSDNLNLQRSAALAFAEI), 77 to 116 (TEKYVSPVSRDVLEPILMLLTNPDPQIRIASCAALGNLAV), 118 to 157 (NENKLLIVEMGGLEPLIEQMKSDNVEVQCNAVGCITNLAT), 159 to 198 (DDNKIEIAQSGALVPLTKLARSSNIRVQRNATGALLNMTH), 200 to 239 (GENRKELVDAGAVPVLVSLLSSMDADVQYYCTTALSNIAV), 241 to 282 (ESNR…NLAS), 284 to 323 (TNYQLEIVRAGGLPDLVQLIQSDSLPLVLASVACIRNISI), 325 to 365 (PLNE…NLAA), and 409 to 448 (DNTKYDLLQQDVLKVLIPMTMSQDQEISGNSAAAVANLIS). A compositionally biased stretch (polar residues) spans 534-556 (QDTNIDHNGNSNNIEGNGRSNKQ). Residues 534-560 (QDTNIDHNGNSNNIEGNGRSNKQSSEK) are disordered.

This sequence belongs to the beta-catenin family.

The protein resides in the vacuole membrane. Its function is as follows. Functions in both vacuole inheritance and protein targeting from the cytoplasm to vacuole. In Kluyveromyces lactis (strain ATCC 8585 / CBS 2359 / DSM 70799 / NBRC 1267 / NRRL Y-1140 / WM37) (Yeast), this protein is Vacuolar protein 8 (VAC8).